We begin with the raw amino-acid sequence, 257 residues long: Hydroxyethylthiazole kinase 1 (257 aa).

Methionine 41 serves as a coordination point for substrate. Positions 117 and 162 each coordinate ATP. Glycine 189 provides a ligand contact to substrate.

The protein belongs to the Thz kinase family. The cofactor is Mg(2+).

The catalysed reaction is 5-(2-hydroxyethyl)-4-methylthiazole + ATP = 4-methyl-5-(2-phosphooxyethyl)-thiazole + ADP + H(+). The protein operates within cofactor biosynthesis; thiamine diphosphate biosynthesis; 4-methyl-5-(2-phosphoethyl)-thiazole from 5-(2-hydroxyethyl)-4-methylthiazole: step 1/1. Catalyzes the phosphorylation of the hydroxyl group of 4-methyl-5-beta-hydroxyethylthiazole (THZ). This chain is Hydroxyethylthiazole kinase 1, found in Oceanobacillus iheyensis (strain DSM 14371 / CIP 107618 / JCM 11309 / KCTC 3954 / HTE831).